Consider the following 334-residue polypeptide: UDP-N-acetylglucosamine 4,6-dehydratase (inverting) (334 aa).

NADP(+) contacts are provided by residues Thr13 to Phe16, Ser37 to Lys42, Asp61 to Val62, Ala81, Lys85, and Leu123 to Ser124. Lys85 lines the substrate pocket. The active site involves Lys127. Residues Tyr135 and Lys139 each coordinate NADP(+). Residue Asn167 coordinates substrate. Val168 to Arg172 is a binding site for NADP(+). Val175, Thr193, Arg252, and Glu255 together coordinate substrate.

The protein belongs to the polysaccharide synthase family. Homohexamer. It depends on NADP(+) as a cofactor.

It carries out the reaction UDP-N-acetyl-alpha-D-glucosamine = UDP-2-acetamido-2,6-dideoxy-beta-L-arabino-hex-4-ulose + H2O. Functionally, catalyzes the first step in the biosynthesis of pseudaminic acid, a sialic-acid-like sugar that is used to modify flagellin. Has both C6 dehydratase and C5 epimerase activities that result in the production of both UDP-2-acetamido-2,6-dideoxy-beta-L-arabino-4-hexulose and UDP-2-acetamido-2,6-dideoxy-alpha-D-xylo-4-hexulose. The protein is UDP-N-acetylglucosamine 4,6-dehydratase (inverting) (pseB) of Campylobacter jejuni subsp. jejuni serotype O:23/36 (strain 81-176).